The sequence spans 417 residues: MGAALLCSFAHAEVVPLDRVVAIVDNDVIMQSQLDQRLREVHQTLLKRGAPLPPEHVLTQQVLERLIIENIQQQIGDRSGIRISDEELNQAMGTIAQRNGMSLEQFQTALTRDGLSYADAREQVRREMVISRVRQRRVAERIQVSEQEVKNFLASDMGKIQLSEEYRLANILIPVPEAASSDVIQAAARQAQELYQQLKQGADFGQLAISRSAGDNALEGGEIGWRKAAQLPQPFDSMIGSLAVGDVTEPVRTPGGFIILKLEEKRGGSKMVRDEVHVRHILLKPSEIRSEAETEKLAQKLYERIQSGEDFGELAKSFSEDPGSALNGGDLNWIDPEALVPEFRQVMNDTPQGELSKPFRSQFGWHILQVLGRRATDSSEKFREQQAVSVLRNRKYDEELQAWLRQIRDEAYVEIKQ.

The first 12 residues, 1–12, serve as a signal peptide directing secretion; it reads MGAALLCSFAHA. PpiC domains are found at residues 163–264 and 273–372; these read SEEY…KLEE and RDEV…QVLG.

It is found in the periplasm. It catalyses the reaction [protein]-peptidylproline (omega=180) = [protein]-peptidylproline (omega=0). Chaperone involved in the correct folding and assembly of outer membrane proteins. Recognizes specific patterns of aromatic residues and the orientation of their side chains, which are found more frequently in integral outer membrane proteins. May act in both early periplasmic and late outer membrane-associated steps of protein maturation. In Pseudomonas aeruginosa (strain ATCC 15692 / DSM 22644 / CIP 104116 / JCM 14847 / LMG 12228 / 1C / PRS 101 / PAO1), this protein is Chaperone SurA.